Here is a 634-residue protein sequence, read N- to C-terminus: 1-deoxy-D-xylulose-5-phosphate synthase (634 aa).

Residues H74 and 115–117 each bind thiamine diphosphate; that span reads AHS. D146 contributes to the Mg(2+) binding site. Thiamine diphosphate is bound by residues 147–148, N176, Y283, and E365; that span reads GA. N176 provides a ligand contact to Mg(2+).

The protein belongs to the transketolase family. DXPS subfamily. Homodimer. Mg(2+) is required as a cofactor. Requires thiamine diphosphate as cofactor.

It carries out the reaction D-glyceraldehyde 3-phosphate + pyruvate + H(+) = 1-deoxy-D-xylulose 5-phosphate + CO2. The protein operates within metabolic intermediate biosynthesis; 1-deoxy-D-xylulose 5-phosphate biosynthesis; 1-deoxy-D-xylulose 5-phosphate from D-glyceraldehyde 3-phosphate and pyruvate: step 1/1. In terms of biological role, catalyzes the acyloin condensation reaction between C atoms 2 and 3 of pyruvate and glyceraldehyde 3-phosphate to yield 1-deoxy-D-xylulose-5-phosphate (DXP). This chain is 1-deoxy-D-xylulose-5-phosphate synthase, found in Burkholderia pseudomallei (strain 668).